A 350-amino-acid chain; its full sequence is MMISERDDFSLTGPLHLTSIDWANEHHRRSVAGSLVQGIYVAERDRQLQREGPELALSPIWSEFFHFRLIRKFVDDADNSIFGGIYEYKLPQQLSQTVKSMEFSPRFVIAFRGTVTKVDSISRDIEHDIHVIRNGLHTTTRFEIAIQAVRNIVASVGGSSVWLAGHSLGASMALLTGKTIARTGFFPECFAFNPPFLSAPIEKIKDKRIKHGIRIAGSVITAGLALAKKATQHYSQNDRALPAPPDPFEALSDWFPRLYVNPGDHLCSEYVGYFEHRNKMEEIGIGFVERVATQHSLGGMLLGGQEPVHLIPSSVLTVNLSSSRDFKQAHGIHQWWREDNKFETKVYQYK.

It belongs to the 'GDSL' lipolytic enzyme family.

The protein is GDSL esterase/lipase At4g10955 of Arabidopsis thaliana (Mouse-ear cress).